The chain runs to 467 residues: 3-isopropylmalate dehydratase large subunit (467 aa).

Positions 348, 409, and 412 each coordinate [4Fe-4S] cluster.

The protein belongs to the aconitase/IPM isomerase family. LeuC type 1 subfamily. Heterodimer of LeuC and LeuD. [4Fe-4S] cluster serves as cofactor.

The catalysed reaction is (2R,3S)-3-isopropylmalate = (2S)-2-isopropylmalate. It participates in amino-acid biosynthesis; L-leucine biosynthesis; L-leucine from 3-methyl-2-oxobutanoate: step 2/4. Functionally, catalyzes the isomerization between 2-isopropylmalate and 3-isopropylmalate, via the formation of 2-isopropylmaleate. In Magnetococcus marinus (strain ATCC BAA-1437 / JCM 17883 / MC-1), this protein is 3-isopropylmalate dehydratase large subunit.